Here is a 417-residue protein sequence, read N- to C-terminus: Phosphoglycerate kinase 2 (417 aa).

N-acetylserine is present on Ser2. Phosphoserine occurs at positions 2 and 4. Lys11 carries the post-translational modification N6-acetyllysine. (2R)-3-phosphoglycerate contacts are provided by Val23, Asp24, Phe25, Asn26, Gln38, and Arg39. Lys48 is modified (N6-acetyllysine). Residues Ser62, His63, Gly65, and Arg66 each contribute to the (2R)-3-phosphoglycerate site. Lys75, Lys86, and Lys97 each carry N6-acetyllysine. (2R)-3-phosphoglycerate is bound by residues Leu122 and Arg123. N6-acetyllysine occurs at positions 131 and 146. His170 and Arg171 together coordinate (2R)-3-phosphoglycerate. A Phosphotyrosine modification is found at Tyr196. An N6-acetyllysine modification is found at Lys199. Gly214 is a binding site for ADP. Residue Gly214 coordinates CDP. 2 residues coordinate AMP: Ala215 and Lys216. Ala215 provides a ligand contact to ATP. Ala215 contributes to the Mg(2+) binding site. Mg(2+)-binding residues include Ala218 and Asp219. Asp219 is a CDP binding site. Lys220 provides a ligand contact to AMP. Residue Lys220 participates in ATP binding. ADP is bound at residue Gly238. A CDP-binding site is contributed by Gly238. Gly239 contacts AMP. Gly239 contacts ATP. An N6-acetyllysine mark is found at Lys267 and Lys291. Gly313 serves as a coordination point for AMP. Residue Gly313 participates in ATP binding. 2 residues coordinate CDP: Gly338 and Phe343. Phe343 lines the ADP pocket. Glu344 contributes to the AMP binding site. ATP contacts are provided by Glu344, Asp375, and Thr376. Asp375 contributes to the Mg(2+) binding site.

This sequence belongs to the phosphoglycerate kinase family. In terms of assembly, monomer. Requires Mg(2+) as cofactor.

The protein resides in the cytoplasm. It catalyses the reaction (2R)-3-phosphoglycerate + ATP = (2R)-3-phospho-glyceroyl phosphate + ADP. The protein operates within carbohydrate degradation; glycolysis; pyruvate from D-glyceraldehyde 3-phosphate: step 2/5. Its function is as follows. Essential for sperm motility and male fertility but is not required for the completion of spermatogenesis. The protein is Phosphoglycerate kinase 2 (PGK2) of Macaca fascicularis (Crab-eating macaque).